A 511-amino-acid polypeptide reads, in one-letter code: Phosphomethylpyrimidine synthase (511 aa).

Substrate is bound by residues Asn-127, Met-156, Tyr-185, His-221, Ser-241 to Gly-243, Asp-282 to Arg-285, and Glu-321. His-325 serves as a coordination point for Zn(2+). Tyr-348 contributes to the substrate binding site. His-389 is a binding site for Zn(2+). Positions 469, 472, and 477 each coordinate [4Fe-4S] cluster. A disordered region spans residues Lys-492–Lys-511.

This sequence belongs to the ThiC family. [4Fe-4S] cluster is required as a cofactor.

It carries out the reaction 5-amino-1-(5-phospho-beta-D-ribosyl)imidazole + S-adenosyl-L-methionine = 4-amino-2-methyl-5-(phosphooxymethyl)pyrimidine + CO + 5'-deoxyadenosine + formate + L-methionine + 3 H(+). Its pathway is cofactor biosynthesis; thiamine diphosphate biosynthesis. In terms of biological role, catalyzes the synthesis of the hydroxymethylpyrimidine phosphate (HMP-P) moiety of thiamine from aminoimidazole ribotide (AIR) in a radical S-adenosyl-L-methionine (SAM)-dependent reaction. This chain is Phosphomethylpyrimidine synthase, found in Leptospira borgpetersenii serovar Hardjo-bovis (strain JB197).